The following is a 428-amino-acid chain: Histidine--tRNA ligase (428 aa).

Belongs to the class-II aminoacyl-tRNA synthetase family. In terms of assembly, homodimer.

It localises to the cytoplasm. It catalyses the reaction tRNA(His) + L-histidine + ATP = L-histidyl-tRNA(His) + AMP + diphosphate + H(+). The polypeptide is Histidine--tRNA ligase (Bordetella bronchiseptica (strain ATCC BAA-588 / NCTC 13252 / RB50) (Alcaligenes bronchisepticus)).